The following is a 131-amino-acid chain: MRHRHSGRQLNRNSSHRKAMFRNMVSSLVEHELIKTTLPKAKELRRYAEPLITLSKVDSVANRRLAFDRLRNKSTVGKLFNELGPRYEGRPGGYLRILKCGFRAGDKAPMAYVELVGRPEPVAEADVSAED.

The protein belongs to the bacterial ribosomal protein bL17 family. In terms of assembly, part of the 50S ribosomal subunit. Contacts protein L32.

In Teredinibacter turnerae (strain ATCC 39867 / T7901), this protein is Large ribosomal subunit protein bL17.